The sequence spans 327 residues: MSHLAELVASAKAAISQASDVAALDNVRVEYLGKKGHLTLQMTTLRELPPEERPAAGAVINEAKEQVQQALNARKAELESAALNARLAAETIDVSLLGRRIENGGLHPVTRTIDRIESFFGELGFTVATGPEIEDDYHNFDALNIPGHHPARADHDTFWFDTTRLLRTQTSGVQIRTMKAQQPPIRIIAPGRVYRNDYDQTHTPMFHQMEGLIVDTNISFTNLKGTLHDFLRNFFEEDLQIRFRPSYFPFTEPSAEVDVMGKNGKWLEVLGCGMVHPNVLRNVGIDPEVYSGFAFGMGMERLTMLRYGVTDLRSFFENDLRFLKQFK.

Mg(2+) is bound at residue glutamate 252.

This sequence belongs to the class-II aminoacyl-tRNA synthetase family. Phe-tRNA synthetase alpha subunit type 1 subfamily. In terms of assembly, tetramer of two alpha and two beta subunits. Requires Mg(2+) as cofactor.

Its subcellular location is the cytoplasm. The enzyme catalyses tRNA(Phe) + L-phenylalanine + ATP = L-phenylalanyl-tRNA(Phe) + AMP + diphosphate + H(+). The protein is Phenylalanine--tRNA ligase alpha subunit of Shigella sonnei (strain Ss046).